Consider the following 337-residue polypeptide: GTPase Obg (337 aa).

In terms of domain architecture, Obg spans 1-159; that stretch reads MQFIDYVKIY…RWVILELKLL (159 aa). Residues 160 to 331 enclose the OBG-type G domain; it reads ADVGLIGLPN…LLHYLSEKVG (172 aa). GTP contacts are provided by residues 166 to 173, 191 to 195, 213 to 216, 283 to 286, and 312 to 314; these read GLPNAGKS, FTTLI, DIPG, TKID, and SAV. Ser173 and Thr193 together coordinate Mg(2+).

It belongs to the TRAFAC class OBG-HflX-like GTPase superfamily. OBG GTPase family. In terms of assembly, monomer. Mg(2+) serves as cofactor.

Its subcellular location is the cytoplasm. An essential GTPase which binds GTP, GDP and possibly (p)ppGpp with moderate affinity, with high nucleotide exchange rates and a fairly low GTP hydrolysis rate. Plays a role in control of the cell cycle, stress response, ribosome biogenesis and in those bacteria that undergo differentiation, in morphogenesis control. The protein is GTPase Obg of Thermodesulfovibrio yellowstonii (strain ATCC 51303 / DSM 11347 / YP87).